The primary structure comprises 811 residues: tRNA(Met) cytidine acetyltransferase TmcA (811 aa).

ATP is bound by residues Q267 and R439. The N-acetyltransferase domain maps to 473 to 662; that stretch reads KKEVYLEEPD…GEFTAIVLKP (190 aa). Acetyl-CoA contacts are provided by residues 589–591, E629, and R636; that span reads IAT.

The protein belongs to the TmcA family.

It localises to the cytoplasm. The catalysed reaction is cytidine(34) in elongator tRNA(Met) + acetyl-CoA + ATP + H2O = N(4)-acetylcytidine(34) in elongator tRNA(Met) + ADP + phosphate + CoA + H(+). It catalyses the reaction a cytidine in RNA + acetyl-CoA + ATP + H2O = an N(4)-acetylcytidine in RNA + ADP + phosphate + CoA + H(+). The enzyme catalyses a cytidine in tRNA + acetyl-CoA + ATP + H2O = an N(4)-acetylcytidine in tRNA + ADP + phosphate + CoA + H(+). It carries out the reaction a cytidine in mRNA + acetyl-CoA + ATP + H2O = an N(4)-acetylcytidine in mRNA + ADP + phosphate + CoA + H(+). Catalyzes the formation of N(4)-acetylcytidine (ac(4)C) at the wobble position of tRNA(Met), by using acetyl-CoA as an acetyl donor and ATP (or GTP). Functionally, catalyzes the formation of 267 N(4)-acetylcytidine (ac(4)C) sites in RNA, almost always on the middle C of a CCG motif. Modifications are found in rRNA, ncRNA, mRNA and tRNA. More acetylation is observed at 95 than at 75 or 85 degrees Celsius. The polypeptide is tRNA(Met) cytidine acetyltransferase TmcA (Thermococcus sp. (strain AM4)).